Consider the following 714-residue polypeptide: T-cell activation Rho GTPase-activating protein (714 aa).

The Rho-GAP domain occupies 88 to 277 (QPLSIICGEN…FLIDNCFEIF (190 aa)). 5 disordered regions span residues 290-357 (DDSL…ESSV), 370-419 (QDRR…AEDP), 451-508 (QGHI…HSMS), 520-563 (RTSS…QSQT), and 623-650 (KPST…HRLS). Positions 299–311 (SDVSTLQNDSAYD) are enriched in polar residues. Serine 398 is subject to Phosphoserine. Residues 459–471 (SRSSPGESLGSSP) show a composition bias toward low complexity. Composition is skewed to basic and acidic residues over residues 492-501 (KTDKTKPQRE) and 527-545 (EKSK…RKES).

As to expression, highly expressed in testis.

In terms of biological role, may function as a GTPase-activating protein. May play a role in transmission ratio distortion (TRD) in mouse, in which heterozygous males for t-locus transmit their t-carrying chromosome to 95% or more of their offspring. This is T-cell activation Rho GTPase-activating protein (Tagap) from Mus musculus (Mouse).